The chain runs to 529 residues: Meiosis 1 arrest protein (529 aa).

2 disordered regions span residues 180 to 201 and 504 to 529; these read KGIQERSDSPSPTEEPSNDESS and AASKASSAAFLPSDSEEGEEERPSHT. The span at 188-200 shows a compositional bias: polar residues; that stretch reads SPSPTEEPSNDES. Position 516 is a phosphoserine (Ser516).

As to expression, expressed in germ cells of the testis. Expressed from spermatogonia to spermatids. Expressed at very low levels in lung, stomach, thymus. Not detected in Sertoli cells.

The protein resides in the cytoplasm. Required for meiosis I progression during spermatogenesis. The polypeptide is Meiosis 1 arrest protein (M1ap) (Mus musculus (Mouse)).